The chain runs to 222 residues: Superoxide dismutase [Cu-Zn], chloroplastic (222 aa).

The N-terminal 68 residues, 1–68 (MAAHTILASA…AASKPLTIVA (68 aa)), are a transit peptide targeting the chloroplast. H114, H116, and H131 together coordinate Cu cation. Residues C125 and C214 are joined by a disulfide bond. Zn(2+)-binding residues include H131, H139, H148, and D151. Cu cation is bound at residue H188.

It belongs to the Cu-Zn superoxide dismutase family. As to quaternary structure, homotetramer. The cofactor is Cu cation. Requires Zn(2+) as cofactor.

The protein localises to the plastid. Its subcellular location is the chloroplast. It catalyses the reaction 2 superoxide + 2 H(+) = H2O2 + O2. Functionally, destroys radicals which are normally produced within the cells and which are toxic to biological systems. In Spinacia oleracea (Spinach), this protein is Superoxide dismutase [Cu-Zn], chloroplastic (SODCP).